A 299-amino-acid chain; its full sequence is MDIVEEILKLKEERNAVILAHNYQLPEVQDIADFIGDSLELARKATKVDADVIVFAGVDFMAETAKILNPDKTVLLPSRRATCAMANMLKVEHIIEAKRKYPNAPVVLYVNSTAETKAYADVTVTSANAVKIVSKLDADVVIFGPDKNLAHYVAKMTGKKVIPVPPNGHCYVHQKFTIEDVERAKKLYPNAKLMVHPECIPEVQEKADIIVSTGGMIKNACLHDEWVVFTEREMVYRLKKLYPEKKFYPAREDAICIGMKAITLKHIYESLRDMKYKVEVPRDIAEKARRAIERMLEMS.

Iminosuccinate contacts are provided by histidine 21 and serine 38. Cysteine 83 contributes to the [4Fe-4S] cluster binding site. Iminosuccinate-binding positions include 109-111 (YVN) and serine 126. Residue cysteine 170 coordinates [4Fe-4S] cluster. Residues 196–198 (HPE) and threonine 213 each bind iminosuccinate. Cysteine 256 contributes to the [4Fe-4S] cluster binding site.

The protein belongs to the quinolinate synthase family. Type 2 subfamily. Requires [4Fe-4S] cluster as cofactor.

The protein resides in the cytoplasm. It catalyses the reaction iminosuccinate + dihydroxyacetone phosphate = quinolinate + phosphate + 2 H2O + H(+). It functions in the pathway cofactor biosynthesis; NAD(+) biosynthesis; quinolinate from iminoaspartate: step 1/1. In terms of biological role, catalyzes the condensation of iminoaspartate with dihydroxyacetone phosphate to form quinolinate. This is Quinolinate synthase from Pyrococcus abyssi (strain GE5 / Orsay).